The primary structure comprises 230 residues: Large ribosomal subunit protein uL1 (230 aa).

The protein belongs to the universal ribosomal protein uL1 family. Part of the 50S ribosomal subunit.

Its function is as follows. Binds directly to 23S rRNA. The L1 stalk is quite mobile in the ribosome, and is involved in E site tRNA release. Functionally, protein L1 is also a translational repressor protein, it controls the translation of the L11 operon by binding to its mRNA. In Bacillus anthracis (strain A0248), this protein is Large ribosomal subunit protein uL1.